Consider the following 737-residue polypeptide: MRSLIRSGALNAFLAASLATGQVLTWDEAYTKATSDLSLLSQEEKVGIVTGVTWQGGPCVGNTYEPTSIPYPSLCLQDGPLSVRFANPVTVFPAGINAGATWDRELIRARGVAMGAESRGLGVHVQLGPVAGALGKIPSAGRNWEGFSNDPYLAGIAMAEAIQGMQSSGVQACAKHYLLNEQEYNRDTISSNADDRTIHELYLWPFYDAVKANVASVMCSYNKINGTWACEHDALLNGLLKGELGFKGHVLSDWNAQHSTVQSANTGLDMTMPGSDFSTPPGSIYWGDNLAAAIADGSVPQERLDDMVTRILAAWYLVGQDQGHPPVAFSSWDGGAASVNVTTPEHGELARTIARDSIVLLKNTNGSLPLAKPASLAVIGSDAIVNPDGANACADRGCNKGTLAQGWGSGTAEFPYLVAPLDAIEEKLAGAGTAIITSTTDDATSGAEAAAAAETAIVFITSDSGEGYITVEGHEGDRNNLDPWHNGNLLVQAVARTNTPTIVVLHSVGPVTLETILAEPNVVAVVWAGLPGQESGHALTDVLFGDYAPSGKLPFTIGKSEEDYGADWTTSQVDDFAEGLFIDYRHFDQYGIEPRYEFGFGLSYTSFNYSTLSTSISTTPGPTTGETIVGGPSDLFAPIGTVSAYVANTGHVAGAEVVQLYIGYPDSAPSIPPKQLRGFDKLHLVPGESGIATFELTRRDISYWDVGLQKWVVASGTFEVFVGASSRDIRLTGSFTV.

Positions 1-19 (MRSLIRSGALNAFLAASLA) are cleaved as a signal peptide. N225 carries an N-linked (GlcNAc...) asparagine glycan. The active site involves D253. N-linked (GlcNAc...) asparagine glycans are attached at residues N340, N365, and N608.

This sequence belongs to the glycosyl hydrolase 3 family.

The protein resides in the secreted. It catalyses the reaction Hydrolysis of terminal, non-reducing beta-D-glucosyl residues with release of beta-D-glucose.. Its pathway is glycan metabolism; cellulose degradation. Its function is as follows. Beta-glucosidases are one of a number of cellulolytic enzymes involved in the degradation of cellulosic biomass. Catalyzes the last step releasing glucose from the inhibitory cellobiose. This chain is Probable beta-glucosidase L (bglL), found in Emericella nidulans (strain FGSC A4 / ATCC 38163 / CBS 112.46 / NRRL 194 / M139) (Aspergillus nidulans).